Reading from the N-terminus, the 311-residue chain is tRNA-cytidine(32) 2-sulfurtransferase (311 aa).

The short motif at 45–50 (SGGKDS) is the PP-loop motif element. Positions 120, 123, and 211 each coordinate [4Fe-4S] cluster.

Belongs to the TtcA family. Homodimer. The cofactor is Mg(2+). [4Fe-4S] cluster is required as a cofactor.

It is found in the cytoplasm. The enzyme catalyses cytidine(32) in tRNA + S-sulfanyl-L-cysteinyl-[cysteine desulfurase] + AH2 + ATP = 2-thiocytidine(32) in tRNA + L-cysteinyl-[cysteine desulfurase] + A + AMP + diphosphate + H(+). The protein operates within tRNA modification. Catalyzes the ATP-dependent 2-thiolation of cytidine in position 32 of tRNA, to form 2-thiocytidine (s(2)C32). The sulfur atoms are provided by the cysteine/cysteine desulfurase (IscS) system. The protein is tRNA-cytidine(32) 2-sulfurtransferase of Shewanella pealeana (strain ATCC 700345 / ANG-SQ1).